Reading from the N-terminus, the 87-residue chain is Putative protein KleG (87 aa).

2 disordered regions span residues 1–23 and 61–87; these read MRHS…WPSS and IPTT…IFSR. A compositionally biased stretch (basic residues) spans 68-78; it reads RGRRPQRHRPS.

In Escherichia coli, this protein is Putative protein KleG (kleG).